The sequence spans 335 residues: MKKWFPAFLFLSLSGGNDALAGWHNVMFYAFNDYLTTNAGNVKVIDQPQLYIPWNTGSATATYYSCSGPEFASGVYFQEYLAWMVVPKHVYTNEGFNIFLDVQSKYGWSMENENDKDFYFFVNGYEWDTWTNNGARICFYPGNMKQLNNKFNDLVFRVLLPVDLPKGHYNFPVRYIRGIQHHYYDLWQDHYKMPYDQIKQLPATNTLMLSFDNVGGCQPSTQVLNIDHGSIVIDRANGNIASQTLSIYCDVPVSVKISLLRNTPPIYNNNKFSVGLGNGWDSIISLDGVEQSEEILRWYTAGSKTVKIESRLYGEEGKRKPGELSGSMTMVLSFP.

A signal peptide spans Met-1 to Ala-21.

This sequence belongs to the adhesin PapG family. Interacts with chaperone PapD. Assembly of the P pilus requires periplasmic chaperone PapD, in absence of the chaperone overexpression of this subunit is toxic, where the protein accumulates in the periplasm. PapD stimulates release of PapG from an inner membrane-associated form (where at least 1 disulfide bond can form) into the periplasm and also helps it achieve its correct digalactoside-binding conformation. Contains disulfide bonds.

The protein resides in the secreted. Its subcellular location is the fimbrium. Its function is as follows. Tip adhesin component of type P pili that binds preferentially to host cell glycosphingolipids such as globotriaosylceramide. In Escherichia coli, this protein is Fimbrial adhesin PapGI.